Reading from the N-terminus, the 209-residue chain is uncharacterized protein (209 aa).

Residues 1-11 (MMRTNAGKETK) are compositionally biased toward basic and acidic residues. The disordered stretch occupies residues 1-20 (MMRTNAGKETKGYNPAPADS).

This is an uncharacterized protein from Caenorhabditis elegans.